Here is a 1335-residue protein sequence, read N- to C-terminus: Aldehyde oxidase 3 (1335 aa).

A 2Fe-2S ferredoxin-type domain is found at 8 to 95; that stretch reads DELIFFVNGK…GAAVTTVEGI (88 aa). Cys47, Cys52, Cys55, and Cys77 together coordinate [2Fe-2S] cluster. Gln116 serves as a coordination point for Mo-molybdopterin. [2Fe-2S] cluster contacts are provided by Cys117, Cys120, Cys152, and Cys154. The FAD-binding PCMH-type domain occupies 236 to 421; sequence FRGERTTWIA…ISVFVPRSSK (186 aa). 264 to 271 is an FAD binding site; that stretch reads LVIGNTYL. A Phosphoserine modification is found at Ser320. FAD contacts are provided by Ser354, His358, Asp367, and Leu411. Mo-molybdopterin-binding residues include Ala802, Leu1043, and Gln1199. Glu1266 functions as the Proton acceptor; for azaheterocycle hydroxylase activity in the catalytic mechanism.

Belongs to the xanthine dehydrogenase family. In terms of assembly, homodimer. [2Fe-2S] cluster serves as cofactor. FAD is required as a cofactor. The cofactor is Mo-molybdopterin. In terms of tissue distribution, highly expressed in liver (at protein level). In liver, the expression is greater in males than females.

The protein localises to the cytoplasm. It catalyses the reaction an aldehyde + O2 + H2O = a carboxylate + H2O2 + H(+). Its activity is regulated as follows. Inhibited by potassium cyanide, menadione, benzamidine, raloxifene and norharmane. In terms of biological role, oxidase with broad substrate specificity, oxidizing aromatic azaheterocycles, such as N1-methylnicotinamide and phthalazine, as well as aldehydes, such as benzaldehyde, retinal and pyridoxal. Plays a key role in the metabolism of xenobiotics and drugs containing aromatic azaheterocyclic substituents. Is probably involved in the regulation of reactive oxygen species homeostasis. May be a prominent source of superoxide generation via the one-electron reduction of molecular oxygen. May also catalyze nitric oxide (NO) production via the reduction of nitrite to NO with NADH or aldehyde as electron donor. The sequence is that of Aldehyde oxidase 3 (Aox3) from Mus musculus (Mouse).